Here is a 201-residue protein sequence, read N- to C-terminus: Xanthine phosphoribosyltransferase (201 aa).

The xanthine site is built by Leu20 and Asn27. A 5-phospho-alpha-D-ribose 1-diphosphate-binding site is contributed by 129-133; the sequence is ANGQA. Residue Lys157 participates in xanthine binding.

It belongs to the purine/pyrimidine phosphoribosyltransferase family. Xpt subfamily. In terms of assembly, homodimer.

The protein localises to the cytoplasm. The enzyme catalyses XMP + diphosphate = xanthine + 5-phospho-alpha-D-ribose 1-diphosphate. The protein operates within purine metabolism; XMP biosynthesis via salvage pathway; XMP from xanthine: step 1/1. Functionally, converts the preformed base xanthine, a product of nucleic acid breakdown, to xanthosine 5'-monophosphate (XMP), so it can be reused for RNA or DNA synthesis. This Shouchella clausii (strain KSM-K16) (Alkalihalobacillus clausii) protein is Xanthine phosphoribosyltransferase.